The chain runs to 386 residues: Succinate--CoA ligase [ADP-forming] subunit beta (386 aa).

The ATP-grasp domain maps to 9 to 244 (KAILRSYGVS…LDEEDPKEIE (236 aa)). ATP is bound by residues lysine 46, 53 to 55 (GRG), glutamate 99, cysteine 102, and glutamate 107. The Mg(2+) site is built by asparagine 199 and aspartate 213. Substrate contacts are provided by residues asparagine 264 and 321–323 (GIM).

It belongs to the succinate/malate CoA ligase beta subunit family. As to quaternary structure, heterotetramer of two alpha and two beta subunits. Requires Mg(2+) as cofactor.

The enzyme catalyses succinate + ATP + CoA = succinyl-CoA + ADP + phosphate. It catalyses the reaction GTP + succinate + CoA = succinyl-CoA + GDP + phosphate. Its pathway is carbohydrate metabolism; tricarboxylic acid cycle; succinate from succinyl-CoA (ligase route): step 1/1. In terms of biological role, succinyl-CoA synthetase functions in the citric acid cycle (TCA), coupling the hydrolysis of succinyl-CoA to the synthesis of either ATP or GTP and thus represents the only step of substrate-level phosphorylation in the TCA. The beta subunit provides nucleotide specificity of the enzyme and binds the substrate succinate, while the binding sites for coenzyme A and phosphate are found in the alpha subunit. This Bacillus cytotoxicus (strain DSM 22905 / CIP 110041 / 391-98 / NVH 391-98) protein is Succinate--CoA ligase [ADP-forming] subunit beta.